A 231-amino-acid polypeptide reads, in one-letter code: Thiamine import ATP-binding protein ThiQ (231 aa).

An ABC transporter domain is found at 2 to 230; it reads LRLEDLDIRK…PPPALRGYLG (229 aa). ATP is bound at residue 32 to 39; sequence GPSGAGKS.

Belongs to the ABC transporter superfamily. Thiamine importer (TC 3.A.1.19.1) family. In terms of assembly, the complex is composed of two ATP-binding proteins (ThiQ), two transmembrane proteins (ThiP) and a solute-binding protein (ThiB).

It is found in the cell inner membrane. It catalyses the reaction thiamine(out) + ATP + H2O = thiamine(in) + ADP + phosphate + H(+). Part of the ABC transporter complex ThiBPQ involved in thiamine import. Responsible for energy coupling to the transport system. This is Thiamine import ATP-binding protein ThiQ from Ruegeria sp. (strain TM1040) (Silicibacter sp.).